The sequence spans 1435 residues: Sterol 3-beta-glucosyltransferase (1435 aa).

Disordered regions lie at residues 1–26 (MAPDDESKKRATRKSTKRWKEEHQVA), 75–107 (SDEEYDLGKPTRQSSESHINRSSIDQKMGKFEG), 123–169 (RFSS…KDTP), and 185–206 (PSFEMPRKSKDPAEVDDERTSP). Residues 85–99 (TRQSSESHINRSSID) are compositionally biased toward polar residues. Positions 123 to 133 (RFSSRSKSKSS) are enriched in low complexity. Positions 134–143 (NTIARGSRTP) are enriched in polar residues. Positions 189–206 (MPRKSKDPAEVDDERTSP) are enriched in basic and acidic residues. In terms of domain architecture, GRAM 1 spans 211-258 (ERLMEIFKFETPEDVLEEYPCWLMKSVLLQGYMYITTKHICFYAYLPK). The region spanning 262–360 (EVVKSGYLSK…WVKALQKIIF (99 aa)) is the PH domain. Disordered stretches follow at residues 444-477 (LSTADDSRGSSKRTSFQVSRDRKLHGPSVQPNAP), 527-594 (DLNR…QASA), 610-671 (QHSP…QAEI), and 727-759 (GKKHYEEPHGIPRDNEMPSIGDDDDNRDGATPA). Residues 527 to 537 (DLNRLTTEHHR) are compositionally biased toward basic and acidic residues. 3 stretches are compositionally biased toward polar residues: residues 539 to 554 (NSANSISTRRSLSTNR), 628 to 647 (KSRSLTSPIKSADVSPTRTQ), and 657 to 671 (TTGSVSDSNVGQAEI). Positions 729-742 (KHYEEPHGIPRDNE) are enriched in basic and acidic residues. In terms of domain architecture, GRAM 2 spans 760–826 (DRFRDHFALP…KDIENVDKEK (67 aa)). UDP-alpha-D-glucose is bound by residues Ser-949, Arg-950, Asp-952, Ala-1252, His-1254, His-1267, Gly-1271, Thr-1272, Asp-1291, and Gln-1292.

It belongs to the glycosyltransferase 28 family.

It localises to the cytoplasm. Its subcellular location is the preautophagosomal structure membrane. It carries out the reaction a sterol + UDP-alpha-D-glucose = a sterol 3-beta-D-glucoside + UDP + H(+). The enzyme catalyses ergosterol + UDP-alpha-D-glucose = ergosteryl 3-beta-D-glucoside + UDP + H(+). In terms of biological role, sterol glycosyltransferase responsible for the glycosylation of ergosterol to form ergosterol-glucoside. This is Sterol 3-beta-glucosyltransferase from Sclerotinia sclerotiorum (strain ATCC 18683 / 1980 / Ss-1) (White mold).